A 140-amino-acid chain; its full sequence is ATP synthase epsilon chain (140 aa).

This sequence belongs to the ATPase epsilon chain family. F-type ATPases have 2 components, CF(1) - the catalytic core - and CF(0) - the membrane proton channel. CF(1) has five subunits: alpha(3), beta(3), gamma(1), delta(1), epsilon(1). CF(0) has three main subunits: a, b and c.

The protein localises to the cell inner membrane. Its function is as follows. Produces ATP from ADP in the presence of a proton gradient across the membrane. The chain is ATP synthase epsilon chain from Xanthomonas axonopodis pv. citri (strain 306).